The sequence spans 407 residues: Imidazolonepropionase (407 aa).

Fe(3+) contacts are provided by His72 and His74. His72 and His74 together coordinate Zn(2+). The 4-imidazolone-5-propanoate site is built by Arg81, Tyr144, and His177. Tyr144 provides a ligand contact to N-formimidoyl-L-glutamate. Fe(3+) is bound at residue His242. Residue His242 participates in Zn(2+) binding. Gln245 contributes to the 4-imidazolone-5-propanoate binding site. Asp317 lines the Fe(3+) pocket. Asp317 provides a ligand contact to Zn(2+). Positions 319 and 321 each coordinate N-formimidoyl-L-glutamate. Position 322 (Thr322) interacts with 4-imidazolone-5-propanoate.

Belongs to the metallo-dependent hydrolases superfamily. HutI family. Zn(2+) serves as cofactor. The cofactor is Fe(3+).

Its subcellular location is the cytoplasm. The catalysed reaction is 4-imidazolone-5-propanoate + H2O = N-formimidoyl-L-glutamate. The protein operates within amino-acid degradation; L-histidine degradation into L-glutamate; N-formimidoyl-L-glutamate from L-histidine: step 3/3. Functionally, catalyzes the hydrolytic cleavage of the carbon-nitrogen bond in imidazolone-5-propanoate to yield N-formimidoyl-L-glutamate. It is the third step in the universal histidine degradation pathway. The sequence is that of Imidazolonepropionase from Rhizobium rhizogenes (Agrobacterium rhizogenes).